Consider the following 394-residue polypeptide: Stearoyl-[acyl-carrier-protein] 9-desaturase 1, chloroplastic (394 aa).

Residues 1–37 (MVMAMDRIALFSSSSSVYHHGSSHSHGSKSSRVFTIR) constitute a chloroplast transit peptide. Glutamate 135, glutamate 173, histidine 176, glutamate 226, glutamate 259, and histidine 262 together coordinate Fe cation.

Belongs to the fatty acid desaturase type 2 family. As to quaternary structure, homodimer. Fe(2+) is required as a cofactor. Ubiquitously expressed.

It localises to the plastid. The protein resides in the chloroplast. The enzyme catalyses octadecanoyl-[ACP] + 2 reduced [2Fe-2S]-[ferredoxin] + O2 + 2 H(+) = (9Z)-octadecenoyl-[ACP] + 2 oxidized [2Fe-2S]-[ferredoxin] + 2 H2O. It participates in lipid metabolism; fatty acid metabolism. Functionally, converts stearoyl-ACP to oleoyl-ACP by introduction of a cis double bond between carbons 9 and 10 of the acyl chain. The chain is Stearoyl-[acyl-carrier-protein] 9-desaturase 1, chloroplastic (S-ACP-DES1) from Arabidopsis thaliana (Mouse-ear cress).